Consider the following 176-residue polypeptide: Lipoprotein signal peptidase (176 aa).

A run of 4 helical transmembrane segments spans residues 11-31 (AFVA…LDQL), 38-58 (ATMQ…VLVF), 76-96 (WFFT…MHQH), and 101-121 (LLPA…VDRL). Residues Asp-128 and Asp-146 contribute to the active site. A helical membrane pass occupies residues 139 to 159 (WPAFNLADSAITLGVGLMLWA).

This sequence belongs to the peptidase A8 family.

The protein resides in the cell inner membrane. The enzyme catalyses Release of signal peptides from bacterial membrane prolipoproteins. Hydrolyzes -Xaa-Yaa-Zaa-|-(S,diacylglyceryl)Cys-, in which Xaa is hydrophobic (preferably Leu), and Yaa (Ala or Ser) and Zaa (Gly or Ala) have small, neutral side chains.. Its pathway is protein modification; lipoprotein biosynthesis (signal peptide cleavage). In terms of biological role, this protein specifically catalyzes the removal of signal peptides from prolipoproteins. The protein is Lipoprotein signal peptidase of Azoarcus sp. (strain BH72).